Consider the following 315-residue polypeptide: Lipoyl synthase (315 aa).

[4Fe-4S] cluster contacts are provided by cysteine 62, cysteine 67, cysteine 73, cysteine 88, cysteine 92, cysteine 95, and serine 302. The region spanning 73-291 is the Radical SAM core domain; sequence CFGHGTATFM…GELAKKLGFS (219 aa).

The protein belongs to the radical SAM superfamily. Lipoyl synthase family. Requires [4Fe-4S] cluster as cofactor.

The protein localises to the cytoplasm. It carries out the reaction [[Fe-S] cluster scaffold protein carrying a second [4Fe-4S](2+) cluster] + N(6)-octanoyl-L-lysyl-[protein] + 2 oxidized [2Fe-2S]-[ferredoxin] + 2 S-adenosyl-L-methionine + 4 H(+) = [[Fe-S] cluster scaffold protein] + N(6)-[(R)-dihydrolipoyl]-L-lysyl-[protein] + 4 Fe(3+) + 2 hydrogen sulfide + 2 5'-deoxyadenosine + 2 L-methionine + 2 reduced [2Fe-2S]-[ferredoxin]. Its pathway is protein modification; protein lipoylation via endogenous pathway; protein N(6)-(lipoyl)lysine from octanoyl-[acyl-carrier-protein]: step 2/2. In terms of biological role, catalyzes the radical-mediated insertion of two sulfur atoms into the C-6 and C-8 positions of the octanoyl moiety bound to the lipoyl domains of lipoate-dependent enzymes, thereby converting the octanoylated domains into lipoylated derivatives. This is Lipoyl synthase from Coxiella burnetii (strain CbuG_Q212) (Coxiella burnetii (strain Q212)).